The following is a 357-amino-acid chain: GTPase Obg (357 aa).

Residues 1-159 enclose the Obg domain; sequence MKFVDEAEIQ…RTLKLELKLL (159 aa). The 184-residue stretch at 160-343 folds into the OBG-type G domain; the sequence is ADIGMLGFPN…IMKSAMTLFE (184 aa). Residues 166–173, 191–195, 213–216, 293–296, and 324–326 contribute to the GTP site; these read GFPNVGKS, FTTLY, DVPG, NKAD, and SAV. Mg(2+) contacts are provided by Ser-173 and Thr-193.

It belongs to the TRAFAC class OBG-HflX-like GTPase superfamily. OBG GTPase family. As to quaternary structure, monomer. The cofactor is Mg(2+).

Its subcellular location is the cytoplasm. Functionally, an essential GTPase which binds GTP, GDP and possibly (p)ppGpp with moderate affinity, with high nucleotide exchange rates and a fairly low GTP hydrolysis rate. Plays a role in control of the cell cycle, stress response, ribosome biogenesis and in those bacteria that undergo differentiation, in morphogenesis control. The chain is GTPase Obg from Xylella fastidiosa (strain 9a5c).